The following is a 294-amino-acid chain: Ribosomal protein L11 methyltransferase (294 aa).

S-adenosyl-L-methionine-binding residues include Thr144, Gly165, Asp187, and Asn229.

Belongs to the methyltransferase superfamily. PrmA family.

Its subcellular location is the cytoplasm. It catalyses the reaction L-lysyl-[protein] + 3 S-adenosyl-L-methionine = N(6),N(6),N(6)-trimethyl-L-lysyl-[protein] + 3 S-adenosyl-L-homocysteine + 3 H(+). Functionally, methylates ribosomal protein L11. This chain is Ribosomal protein L11 methyltransferase, found in Pseudomonas aeruginosa (strain LESB58).